The primary structure comprises 314 residues: tRNA(Ile)-lysidine synthase (314 aa).

37-42 (SGGPDS) provides a ligand contact to ATP.

It belongs to the tRNA(Ile)-lysidine synthase family.

Its subcellular location is the cytoplasm. The catalysed reaction is cytidine(34) in tRNA(Ile2) + L-lysine + ATP = lysidine(34) in tRNA(Ile2) + AMP + diphosphate + H(+). Ligates lysine onto the cytidine present at position 34 of the AUA codon-specific tRNA(Ile) that contains the anticodon CAU, in an ATP-dependent manner. Cytidine is converted to lysidine, thus changing the amino acid specificity of the tRNA from methionine to isoleucine. This is tRNA(Ile)-lysidine synthase from Corynebacterium glutamicum (strain ATCC 13032 / DSM 20300 / JCM 1318 / BCRC 11384 / CCUG 27702 / LMG 3730 / NBRC 12168 / NCIMB 10025 / NRRL B-2784 / 534).